A 118-amino-acid polypeptide reads, in one-letter code: Neutral phospholipase A2 homolog taipoxin beta chain 2 (118 aa).

Intrachain disulfides connect cysteine 11/cysteine 71, cysteine 27/cysteine 117, cysteine 29/cysteine 45, cysteine 44/cysteine 98, cysteine 51/cysteine 91, cysteine 60/cysteine 84, and cysteine 78/cysteine 89.

The protein belongs to the phospholipase A2 family. Group I subfamily. D49 sub-subfamily. Heterotrimer of alpha, beta, and gamma chains; non-covalently linked. Expressed by the venom gland.

Its subcellular location is the secreted. Functionally, heterotrimer: Snake venom phospholipase A2 (PLA2) heterotrimer that acts as a potent presynaptic neurotoxin by blocking synaptic transmission and synaptic vesicle recycling. May act by binding in a calcium-dependent fashion to neurotonal pentraxin-1 (NPTX1) and neurotonal pentraxin-2 (NPTX2), but not to neuronal pentraxin receptor (NPTXR). Also binds to taipoxin-associated calcium binding protein 49 (RCN2), a protein localized in the lumen of endoplasmic reticulum. Monomer (beta chain): Snake venom phospholipase A2 homolog that is neither toxic nor enzymatically active. Does not bind calcium. This chain is Neutral phospholipase A2 homolog taipoxin beta chain 2, found in Oxyuranus scutellatus scutellatus (Australian taipan).